A 172-amino-acid polypeptide reads, in one-letter code: Translationally-controlled tumor protein (172 aa).

The region spanning 1–172 is the TCTP domain; the sequence is MIIYRDLISH…FKDGLEMEKC (172 aa). Position 46 is a phosphoserine; by PLK1 (Ser-46). Residue Ser-53 is modified to Phosphoserine. The residue at position 64 (Ser-64) is a Phosphoserine; by PLK1. Positions 70 to 172 are required for reduction of TSC22D1 protein stability; sequence VDIVMNHHLQ…FKDGLEMEKC (103 aa).

It belongs to the TCTP family. As to quaternary structure, homodimer. Interacts with STEAP3. Interacts with TSC22D1; interaction results in the destabilization of TSC22D1 protein.

The protein localises to the cytoplasm. In terms of biological role, involved in calcium binding and microtubule stabilization. Acts as a negative regulator of TSC22D1-mediated apoptosis, via interaction with and destabilization of TSC22D1 protein. This chain is Translationally-controlled tumor protein (TPT1), found in Bos taurus (Bovine).